Consider the following 246-residue polypeptide: MLLIPAIDLKDGHCVRLKQGDMDQSTIFSEDPAAMARNWVDKGARRLHLVDLNGAFAGKPKNEAAIKRILAEVGSEIDVQLGGGIRDLDTIERYLDAGLRYVIIGTAAVKNPGFLQDACTAFGGHIIVGLDAKDGRVATDGWSKLTGHEVVDLAKKFQDYGVESIIYTDIGRDGMLSGINIQATVKLAQALTIPVIASGGLSNMADIDALCAVEDEGVQGVICGRSIYSGDLDFEAAQERADELNG.

Aspartate 8 acts as the Proton acceptor in catalysis. The Proton donor role is filled by aspartate 131.

This sequence belongs to the HisA/HisF family.

It localises to the cytoplasm. The catalysed reaction is 1-(5-phospho-beta-D-ribosyl)-5-[(5-phospho-beta-D-ribosylamino)methylideneamino]imidazole-4-carboxamide = 5-[(5-phospho-1-deoxy-D-ribulos-1-ylimino)methylamino]-1-(5-phospho-beta-D-ribosyl)imidazole-4-carboxamide. Its pathway is amino-acid biosynthesis; L-histidine biosynthesis; L-histidine from 5-phospho-alpha-D-ribose 1-diphosphate: step 4/9. This is 1-(5-phosphoribosyl)-5-[(5-phosphoribosylamino)methylideneamino] imidazole-4-carboxamide isomerase from Polaromonas naphthalenivorans (strain CJ2).